Here is a 440-residue protein sequence, read N- to C-terminus: Transposon Ty1-DR1 Gag polyprotein (440 aa).

3 stretches are compositionally biased toward polar residues: residues 1 to 10 (MESQQLSNYP), 48 to 60 (TKAN…TPAS), and 127 to 152 (QSQF…GNTF). 3 disordered regions span residues 1 to 93 (MESQ…MMTQ), 126 to 173 (PQSQ…RPPP), and 352 to 440 (GSRN…PGTY). Over residues 153 to 165 (TDSSSADSDMTST) the composition is skewed to low complexity. The RNA-binding stretch occupies residues 299–401 (NNGIHINNKV…NSKSKTARAH (103 aa)). Residues 402-418 (NVSTSNNSPSTDNDSIS) show a composition bias toward low complexity. Ser416 carries the post-translational modification Phosphoserine. Polar residues predominate over residues 419-428 (KSTTEPIQLN). Over residues 429–440 (NKHDLHLRPGTY) the composition is skewed to basic and acidic residues.

In terms of assembly, homotrimer.

It localises to the cytoplasm. Its function is as follows. Capsid protein (CA) is the structural component of the virus-like particle (VLP), forming the shell that encapsulates the retrotransposons dimeric RNA genome. The particles are assembled from trimer-clustered units and there are holes in the capsid shells that allow for the diffusion of macromolecules. CA also has nucleocapsid-like chaperone activity, promoting primer tRNA(i)-Met annealing to the multipartite primer-binding site (PBS), dimerization of Ty1 RNA and initiation of reverse transcription. This is Transposon Ty1-DR1 Gag polyprotein (TY1A-DR1) from Saccharomyces cerevisiae (strain ATCC 204508 / S288c) (Baker's yeast).